Consider the following 326-residue polypeptide: Diphthine methyltransferase (326 aa).

WD repeat units follow at residues 65-105 (MHCD…ELMF), 113-152 (DSSV…IKNK), 155-195 (EHDY…SCIW), and 293-326 (EHES…WEDI).

The protein belongs to the DPH7 family.

The protein localises to the cytoplasm. It is found in the nucleus. The enzyme catalyses diphthine methyl ester-[translation elongation factor 2] + H2O = diphthine-[translation elongation factor 2] + methanol + H(+). It participates in protein modification; peptidyl-diphthamide biosynthesis. Its function is as follows. Catalyzes the demethylation of diphthine methyl ester to form diphthine, an intermediate in diphthamide biosynthesis, a post-translational modification of histidine which occurs in translation elongation factor 2 (eft201 and eft202). The sequence is that of Diphthine methyltransferase (rrt2) from Schizosaccharomyces pombe (strain 972 / ATCC 24843) (Fission yeast).